The following is a 275-amino-acid chain: MAGVSSESLATALAALEAKLPTASLQLAKELFGILGMVDSSAGLRRALTDPSRNGDEKSALVRQLVGGKVSADAAEVAGGLAGSRWASARDIGDALETLAATVVISVAENKSAVSASGITGLEELENDLFSFNQAVASSHEVQRALSEPQASGAAKAALAEKLVPGVSEEAKVLITQAVTQPRGIKATRLVERFAELAAKRQQRWIATVSVTRPLTSTQLSRLQAGLNALYGRELKVNINVDPALIGGIRVQVGDEVLDASVISRLGELQRQLAG.

This sequence belongs to the ATPase delta chain family. F-type ATPases have 2 components, F(1) - the catalytic core - and F(0) - the membrane proton channel. F(1) has five subunits: alpha(3), beta(3), gamma(1), delta(1), epsilon(1). F(0) has three main subunits: a(1), b(2) and c(10-14). The alpha and beta chains form an alternating ring which encloses part of the gamma chain. F(1) is attached to F(0) by a central stalk formed by the gamma and epsilon chains, while a peripheral stalk is formed by the delta and b chains.

The protein resides in the cell membrane. Functionally, f(1)F(0) ATP synthase produces ATP from ADP in the presence of a proton or sodium gradient. F-type ATPases consist of two structural domains, F(1) containing the extramembraneous catalytic core and F(0) containing the membrane proton channel, linked together by a central stalk and a peripheral stalk. During catalysis, ATP synthesis in the catalytic domain of F(1) is coupled via a rotary mechanism of the central stalk subunits to proton translocation. In terms of biological role, this protein is part of the stalk that links CF(0) to CF(1). It either transmits conformational changes from CF(0) to CF(1) or is implicated in proton conduction. This chain is ATP synthase subunit delta, found in Pseudarthrobacter chlorophenolicus (strain ATCC 700700 / DSM 12829 / CIP 107037 / JCM 12360 / KCTC 9906 / NCIMB 13794 / A6) (Arthrobacter chlorophenolicus).